A 235-amino-acid chain; its full sequence is 2-C-methyl-D-erythritol 4-phosphate cytidylyltransferase (235 aa).

Belongs to the IspD/TarI cytidylyltransferase family. IspD subfamily.

The catalysed reaction is 2-C-methyl-D-erythritol 4-phosphate + CTP + H(+) = 4-CDP-2-C-methyl-D-erythritol + diphosphate. The protein operates within isoprenoid biosynthesis; isopentenyl diphosphate biosynthesis via DXP pathway; isopentenyl diphosphate from 1-deoxy-D-xylulose 5-phosphate: step 2/6. Its function is as follows. Catalyzes the formation of 4-diphosphocytidyl-2-C-methyl-D-erythritol from CTP and 2-C-methyl-D-erythritol 4-phosphate (MEP). This is 2-C-methyl-D-erythritol 4-phosphate cytidylyltransferase from Pseudomonas fluorescens (strain ATCC BAA-477 / NRRL B-23932 / Pf-5).